A 334-amino-acid chain; its full sequence is Cytoskeleton protein RodZ (334 aa).

Residues 1-111 (MNTEATHDQN…LGKRRKKRDG (111 aa)) are Cytoplasmic-facing. In terms of domain architecture, HTH cro/C1-type spans 19 to 71 (LRNAREQLGLSQQAVAERLCLKVSTVRDIEEDKAPSDLASTFLRGYIRSYARL). The H-T-H motif DNA-binding region spans 30–49 (QQAVAERLCLKVSTVRDIEE). Residues 112 to 132 (WLMSFTWLVLFVVVGLTGAWW) form a helical; Signal-anchor for type II membrane protein membrane-spanning segment. At 133-334 (WQNHKAHQEE…TLNAEPTPAQ (202 aa)) the chain is on the periplasmic side. The tract at residues 152 to 210 (AGLNADKDSGQSVPLDTGAVTSQDTTPAQTAPAPATPVDSTAATQTPAPTAAATQNTVV) is disordered. Positions 161 to 175 (GQSVPLDTGAVTSQD) are enriched in polar residues. Residues 176 to 210 (TTPAQTAPAPATPVDSTAATQTPAPTAAATQNTVV) show a composition bias toward low complexity.

Belongs to the RodZ family.

It localises to the cell inner membrane. Cytoskeletal protein that is involved in cell-shape control through regulation of the length of the long axis. The protein is Cytoskeleton protein RodZ of Salmonella gallinarum (strain 287/91 / NCTC 13346).